We begin with the raw amino-acid sequence, 1078 residues long: Isoleucine--tRNA ligase (1078 aa).

The short motif at 52–62 (PTANGKPALHH) is the 'HIGH' region element. Positions 637–641 (KMSKS) match the 'KMSKS' region motif. Residue K640 participates in ATP binding.

Belongs to the class-I aminoacyl-tRNA synthetase family. IleS type 2 subfamily. As to quaternary structure, monomer. The cofactor is Zn(2+).

The protein resides in the cytoplasm. It catalyses the reaction tRNA(Ile) + L-isoleucine + ATP = L-isoleucyl-tRNA(Ile) + AMP + diphosphate. Its function is as follows. Catalyzes the attachment of isoleucine to tRNA(Ile). As IleRS can inadvertently accommodate and process structurally similar amino acids such as valine, to avoid such errors it has two additional distinct tRNA(Ile)-dependent editing activities. One activity is designated as 'pretransfer' editing and involves the hydrolysis of activated Val-AMP. The other activity is designated 'posttransfer' editing and involves deacylation of mischarged Val-tRNA(Ile). The sequence is that of Isoleucine--tRNA ligase from Deinococcus radiodurans (strain ATCC 13939 / DSM 20539 / JCM 16871 / CCUG 27074 / LMG 4051 / NBRC 15346 / NCIMB 9279 / VKM B-1422 / R1).